The following is a 284-amino-acid chain: Bifunctional protein FolD (284 aa).

Residues 165–167, serine 190, and valine 231 each bind NADP(+); that span reads GRS.

The protein belongs to the tetrahydrofolate dehydrogenase/cyclohydrolase family. In terms of assembly, homodimer.

It carries out the reaction (6R)-5,10-methylene-5,6,7,8-tetrahydrofolate + NADP(+) = (6R)-5,10-methenyltetrahydrofolate + NADPH. The enzyme catalyses (6R)-5,10-methenyltetrahydrofolate + H2O = (6R)-10-formyltetrahydrofolate + H(+). Its pathway is one-carbon metabolism; tetrahydrofolate interconversion. Functionally, catalyzes the oxidation of 5,10-methylenetetrahydrofolate to 5,10-methenyltetrahydrofolate and then the hydrolysis of 5,10-methenyltetrahydrofolate to 10-formyltetrahydrofolate. In Geobacillus kaustophilus (strain HTA426), this protein is Bifunctional protein FolD.